A 154-amino-acid polypeptide reads, in one-letter code: Probable prefoldin subunit 5 (154 aa).

Belongs to the prefoldin subunit alpha family. In terms of assembly, heterohexamer of two PFD-alpha type and four PFD-beta type subunits.

In terms of biological role, binds specifically to cytosolic chaperonin (c-CPN) and transfers target proteins to it. Binds to nascent polypeptide chain and promotes folding in an environment in which there are many competing pathways for nonnative proteins. The polypeptide is Probable prefoldin subunit 5 (Caenorhabditis briggsae).